We begin with the raw amino-acid sequence, 341 residues long: tRNA N6-adenosine threonylcarbamoyltransferase (341 aa).

Residues His-111 and His-115 each coordinate Fe cation. Residues 134-138, Asp-167, Gly-180, and Asn-276 each bind substrate; that span reads LVSGG. Residue Asp-304 coordinates Fe cation.

This sequence belongs to the KAE1 / TsaD family. The cofactor is Fe(2+).

Its subcellular location is the cytoplasm. The catalysed reaction is L-threonylcarbamoyladenylate + adenosine(37) in tRNA = N(6)-L-threonylcarbamoyladenosine(37) in tRNA + AMP + H(+). In terms of biological role, required for the formation of a threonylcarbamoyl group on adenosine at position 37 (t(6)A37) in tRNAs that read codons beginning with adenine. Is involved in the transfer of the threonylcarbamoyl moiety of threonylcarbamoyl-AMP (TC-AMP) to the N6 group of A37, together with TsaE and TsaB. TsaD likely plays a direct catalytic role in this reaction. This is tRNA N6-adenosine threonylcarbamoyltransferase from Pseudomonas aeruginosa (strain UCBPP-PA14).